The chain runs to 171 residues: Ribosome maturation factor RimM (171 aa).

A PRC barrel domain is found at 93–167; that stretch reads DGVYYYKDIF…KVYVELMEGL (75 aa).

The protein belongs to the RimM family. As to quaternary structure, binds ribosomal protein uS19.

The protein localises to the cytoplasm. Its function is as follows. An accessory protein needed during the final step in the assembly of 30S ribosomal subunit, possibly for assembly of the head region. Essential for efficient processing of 16S rRNA. May be needed both before and after RbfA during the maturation of 16S rRNA. It has affinity for free ribosomal 30S subunits but not for 70S ribosomes. The protein is Ribosome maturation factor RimM of Lactobacillus helveticus (strain DPC 4571).